The following is a 179-amino-acid chain: Large ribosomal subunit protein uL5 (179 aa).

This sequence belongs to the universal ribosomal protein uL5 family. Part of the 50S ribosomal subunit; part of the 5S rRNA/L5/L18/L25 subcomplex. Contacts the 5S rRNA and the P site tRNA. Forms a bridge to the 30S subunit in the 70S ribosome.

Its function is as follows. This is one of the proteins that bind and probably mediate the attachment of the 5S RNA into the large ribosomal subunit, where it forms part of the central protuberance. In the 70S ribosome it contacts protein S13 of the 30S subunit (bridge B1b), connecting the 2 subunits; this bridge is implicated in subunit movement. Contacts the P site tRNA; the 5S rRNA and some of its associated proteins might help stabilize positioning of ribosome-bound tRNAs. This Shewanella baltica (strain OS223) protein is Large ribosomal subunit protein uL5.